The primary structure comprises 345 residues: Protein-glutamate methylesterase/protein-glutamine glutaminase 2 (345 aa).

Residues 7–124 enclose the Response regulatory domain; the sequence is KVLVVDDSPV…TADMLGYRSL (118 aa). Asp-58 bears the 4-aspartylphosphate mark. The CheB-type methylesterase domain maps to 154–345; it reads STSQYQLIAI…LPQFLCDLLS (192 aa). Active-site residues include Ser-166, His-192, and Asp-289.

Belongs to the CheB family. In terms of processing, phosphorylated by CheA. Phosphorylation of the N-terminal regulatory domain activates the methylesterase activity.

It localises to the cytoplasm. It catalyses the reaction [protein]-L-glutamate 5-O-methyl ester + H2O = L-glutamyl-[protein] + methanol + H(+). The catalysed reaction is L-glutaminyl-[protein] + H2O = L-glutamyl-[protein] + NH4(+). Involved in chemotaxis. Part of a chemotaxis signal transduction system that modulates chemotaxis in response to various stimuli. Catalyzes the demethylation of specific methylglutamate residues introduced into the chemoreceptors (methyl-accepting chemotaxis proteins or MCP) by CheR. Also mediates the irreversible deamidation of specific glutamine residues to glutamic acid. In Vibrio vulnificus (strain YJ016), this protein is Protein-glutamate methylesterase/protein-glutamine glutaminase 2.